The following is a 357-amino-acid chain: MKNKYYPLRSSMDEMSAKNDNEIDLEKGPLPEYNSEDGSTLPPYSEIWKYIKTVSEDSSTGPTETTNPNVERRQEFKDSHPNIYSLLRLLISVLAVIVVFFTAWVCVNPLEKSIFGKVAFFVTIGITCPILLITIFCFFETWTQAVAQCIKVTVIFLAQCVKVTVISLAKCVKVTAISLAKCVKVTAVGLYNSREKWVVIIWLLWVVICYTLFLRSKFGNLNLNKALICSTCSISAALLLFLLYVRLPFWTLKHMFSGLFQVLGVQSCVVIVTKGLMHLFDKHIDATGYEIEASSLFVIGNFLFFYEMECPGALRRMPKSIRNGIASFLEGTGKAIRGANDNNNNIPLEETEAESEV.

The segment at 1–39 is disordered; that stretch reads MKNKYYPLRSSMDEMSAKNDNEIDLEKGPLPEYNSEDGS. The segment covering 11-29 has biased composition (basic and acidic residues); it reads SMDEMSAKNDNEIDLEKGP. Transmembrane regions (helical) follow at residues 89 to 109, 119 to 139, 149 to 169, 198 to 218, 232 to 252, 256 to 276, and 286 to 306; these read LLIS…CVNP, AFFV…FCFF, CIKV…ISLA, VVII…RSKF, CSIS…FWTL, FSGL…TKGL, and ATGY…LFFY.

Belongs to the WTF family. Homomer. Forms protein aggregates. The two isoforms can interact with each other and with themselves. High sequence similarity is required for their interaction.

Its subcellular location is the spore membrane. It localises to the vacuole membrane. It is found in the ascus epiplasm. The protein resides in the cytoplasm. The protein localises to the endoplasmic reticulum membrane. Promotes unequal transmission of alleles from the parental zygote to progeny spores by acting as poison/antidote system where the poison and antidote proteins are produced from the same locus; the poison component is trans-acting and targets all spores within an ascus whereas the antidote component is spore-specific, leading to poisoning of all progeny that do not inherit the allele. Its function is as follows. Localizes isoform 2 to the vacuole thereby facilitating its degradation. In terms of biological role, forms toxic aggregates that disrupt spore maturation. This chain is Meiotic driver wtf9, found in Schizosaccharomyces kambucha (Fission yeast).